A 195-amino-acid polypeptide reads, in one-letter code: MVKIRLRRAGRKKLPVYQIVAADARAPRDGKFLEVVGHYQPTAKPHVVTLDRERVAYWMQTGAQPTSTVRSLIQKTGLLYELRLKKLGRSEAEVAEEMEKWQEKQAERRQKRLNVKSRRRQLKKEAAAKPAVAEEVAAPVAAAPVAEAPVAEVEVVIAPEVQVEAAVEAVPEAPVAAAEPAPEVKAEEKEEGGEA.

Low complexity predominate over residues 171–181 (PEAPVAAAEPA). Residues 171–195 (PEAPVAAAEPAPEVKAEEKEEGGEA) are disordered.

It belongs to the bacterial ribosomal protein bS16 family.

In Chlorobium luteolum (strain DSM 273 / BCRC 81028 / 2530) (Pelodictyon luteolum), this protein is Small ribosomal subunit protein bS16.